The primary structure comprises 1014 residues: RNA-directed RNA polymerase (1014 aa).

Residues 618–740 form the RdRp catalytic domain; sequence HELEEGDYTC…ANHQGEFHSY (123 aa). Residues 918-1014 are disordered; sequence KEEDERQPET…TLVFKNSSLS (97 aa). Residues 956–967 show a composition bias toward basic residues; it reads KGKRKVKGRRPR.

It belongs to the nodaviridae RNA polymerase family.

The enzyme catalyses RNA(n) + a ribonucleoside 5'-triphosphate = RNA(n+1) + diphosphate. Functionally, RNA-dependent RNA polymerase which replicates the viral genome composed of 2 RNA segments, RNA1 and RNA2. The chain is RNA-directed RNA polymerase from Pieris rapae (Small white butterfly).